A 256-amino-acid polypeptide reads, in one-letter code: 6-carboxyhexanoate--CoA ligase (256 aa).

Belongs to the BioW family. In terms of assembly, homodimer. Mg(2+) serves as cofactor.

The catalysed reaction is heptanedioate + ATP + CoA = 6-carboxyhexanoyl-CoA + AMP + diphosphate. The protein operates within metabolic intermediate metabolism; pimeloyl-CoA biosynthesis; pimeloyl-CoA from pimelate: step 1/1. Catalyzes the transformation of pimelate into pimeloyl-CoA with concomitant hydrolysis of ATP to AMP. The chain is 6-carboxyhexanoate--CoA ligase from Bacillus amyloliquefaciens (strain ATCC 23350 / DSM 7 / BCRC 11601 / CCUG 28519 / NBRC 15535 / NRRL B-14393 / F).